The following is a 231-amino-acid chain: Endo-1,4-beta-xylanase 4 (231 aa).

Positions 1 to 18 are cleaved as a signal peptide; that stretch reads MVSFTTILVAATAALVAA. A GH11 domain is found at 42–230; that stretch reads GGTPSSTGTH…SSGSSTVTIQ (189 aa). An N-linked (GlcNAc...) asparagine glycan is attached at asparagine 99. Glutamate 126 functions as the Nucleophile in the catalytic mechanism. Glutamate 217 functions as the Proton donor in the catalytic mechanism.

Belongs to the glycosyl hydrolase 11 (cellulase G) family.

It localises to the secreted. The catalysed reaction is Endohydrolysis of (1-&gt;4)-beta-D-xylosidic linkages in xylans.. It participates in glycan degradation; xylan degradation. Endo-1,4-beta-xylanase involved in the hydrolysis of xylan, a major structural heterogeneous polysaccharide found in plant biomass representing the second most abundant polysaccharide in the biosphere, after cellulose. The polypeptide is Endo-1,4-beta-xylanase 4 (XYL4) (Pyricularia grisea (Crabgrass-specific blast fungus)).